The primary structure comprises 208 residues: High frequency lysogenization protein HflD homolog (208 aa).

This sequence belongs to the HflD family.

Its subcellular location is the cytoplasm. It is found in the cell inner membrane. In Pseudomonas putida (strain ATCC 700007 / DSM 6899 / JCM 31910 / BCRC 17059 / LMG 24140 / F1), this protein is High frequency lysogenization protein HflD homolog.